The chain runs to 281 residues: Acyl-[acyl-carrier-protein]--UDP-N-acetylglucosamine O-acyltransferase (281 aa).

It belongs to the transferase hexapeptide repeat family. LpxA subfamily. In terms of assembly, homotrimer.

Its subcellular location is the cytoplasm. It catalyses the reaction a (3R)-hydroxyacyl-[ACP] + UDP-N-acetyl-alpha-D-glucosamine = a UDP-3-O-[(3R)-3-hydroxyacyl]-N-acetyl-alpha-D-glucosamine + holo-[ACP]. The protein operates within glycolipid biosynthesis; lipid IV(A) biosynthesis; lipid IV(A) from (3R)-3-hydroxytetradecanoyl-[acyl-carrier-protein] and UDP-N-acetyl-alpha-D-glucosamine: step 1/6. In terms of biological role, involved in the biosynthesis of lipid A, a phosphorylated glycolipid that anchors the lipopolysaccharide to the outer membrane of the cell. In Rickettsia bellii (strain OSU 85-389), this protein is Acyl-[acyl-carrier-protein]--UDP-N-acetylglucosamine O-acyltransferase.